A 430-amino-acid chain; its full sequence is Adenylosuccinate synthetase (430 aa).

GTP contacts are provided by residues 12 to 18 (GDEGKGK) and 40 to 42 (GHT). D13 acts as the Proton acceptor in catalysis. Positions 13 and 40 each coordinate Mg(2+). Residues 13 to 16 (DEGK), 38 to 41 (NAGH), T128, R142, Q223, T238, and R302 contribute to the IMP site. The active-site Proton donor is H41. Position 298 to 304 (298 to 304 (TTTGRPR)) interacts with substrate. Residues R304, 330-332 (LLD), and 412-414 (SVG) each bind GTP.

Belongs to the adenylosuccinate synthetase family. As to quaternary structure, homodimer. Mg(2+) serves as cofactor.

Its subcellular location is the cytoplasm. The enzyme catalyses IMP + L-aspartate + GTP = N(6)-(1,2-dicarboxyethyl)-AMP + GDP + phosphate + 2 H(+). The protein operates within purine metabolism; AMP biosynthesis via de novo pathway; AMP from IMP: step 1/2. In terms of biological role, plays an important role in the de novo pathway of purine nucleotide biosynthesis. Catalyzes the first committed step in the biosynthesis of AMP from IMP. This Listeria innocua serovar 6a (strain ATCC BAA-680 / CLIP 11262) protein is Adenylosuccinate synthetase.